Consider the following 76-residue polypeptide: uncharacterized protein (76 aa).

A helical transmembrane segment spans residues 24–44 (GAIFLVCYPLYCVVCFVSVLC).

The protein resides in the membrane. This is an uncharacterized protein from Schizosaccharomyces pombe (strain 972 / ATCC 24843) (Fission yeast).